Consider the following 258-residue polypeptide: DNA-directed RNA polymerase subunit Rpo3 (258 aa).

This sequence belongs to the archaeal Rpo3/eukaryotic RPB3 RNA polymerase subunit family. In terms of assembly, part of the RNA polymerase complex.

The protein resides in the cytoplasm. It carries out the reaction RNA(n) + a ribonucleoside 5'-triphosphate = RNA(n+1) + diphosphate. Functionally, DNA-dependent RNA polymerase (RNAP) catalyzes the transcription of DNA into RNA using the four ribonucleoside triphosphates as substrates. This chain is DNA-directed RNA polymerase subunit Rpo3, found in Pyrobaculum calidifontis (strain DSM 21063 / JCM 11548 / VA1).